We begin with the raw amino-acid sequence, 258 residues long: Ribosomal RNA small subunit methyltransferase A (258 aa).

Positions 13, 15, 40, 61, 86, and 106 each coordinate S-adenosyl-L-methionine.

It belongs to the class I-like SAM-binding methyltransferase superfamily. rRNA adenine N(6)-methyltransferase family. RsmA subfamily.

The protein resides in the cytoplasm. It catalyses the reaction adenosine(1518)/adenosine(1519) in 16S rRNA + 4 S-adenosyl-L-methionine = N(6)-dimethyladenosine(1518)/N(6)-dimethyladenosine(1519) in 16S rRNA + 4 S-adenosyl-L-homocysteine + 4 H(+). Specifically dimethylates two adjacent adenosines (A1518 and A1519) in the loop of a conserved hairpin near the 3'-end of 16S rRNA in the 30S particle. May play a critical role in biogenesis of 30S subunits. This chain is Ribosomal RNA small subunit methyltransferase A, found in Coxiella burnetii (strain RSA 331 / Henzerling II).